Consider the following 277-residue polypeptide: UBX domain-containing protein 8 (277 aa).

M1 is a topological domain (cytoplasmic). A helical transmembrane segment spans residues 2–22 (ASRGVVGLFLLSALPLLCLEL). Residues 23-33 (RRGIPSLGIKD) lie on the Lumenal side of the membrane. The chain crosses the membrane as a helical span at residues 34–54 (LILLSGRIFLLLALLTLVISV). At 55–277 (TTSWFNSLKP…NVEEKEQSSQ (223 aa)) the chain is on the cytoplasmic side. The segment at 64–89 (PSQGHLKEGEKENEKRRRLVRERQQE) is disordered. A compositionally biased stretch (basic and acidic residues) spans 68–89 (HLKEGEKENEKRRRLVRERQQE). Residues 193 to 269 (TAEEVVTVAL…GITVDTVLNV (77 aa)) form the UBX domain.

In terms of assembly, interacts with SYVN1 and VCP. As to expression, highly expressed in gonads. In testis, expressed in post-meiotic round spermatids, while in ovaries it is expressed in granulosa cells.

It is found in the endoplasmic reticulum membrane. Involved in endoplasmic reticulum-associated degradation (ERAD) for misfolded lumenal proteins, possibly by tethering VCP to the endoplasmic reticulum membrane. May play a role in reproduction. The protein is UBX domain-containing protein 8 (Ubxn8) of Mus musculus (Mouse).